A 441-amino-acid polypeptide reads, in one-letter code: Hexane cyclase gkaB (441 aa).

A signal peptide spans Met-1–Thr-25. N-linked (GlcNAc...) asparagine glycans are attached at residues Asn-77, Asn-153, Asn-184, and Asn-308.

It belongs to the Diels-Alderase family.

Its pathway is mycotoxin biosynthesis. In terms of biological role, hexane cyclase; part of the gene cluster that mediates the biosynthesis of GKK1032, fungal natural products containing a macrocyclic para-cyclophane connected to a decahydrofluorene ring system that show potent antitumor activities. Within the pathway, gkaB functions synergistically with gkaX and gkaZ to form the cyclophane. The pathway begins with the PKS-NRPS gkaA which, with the help of the trans-enoyl reductase gkaC, synthesizes the polyketide-tyrosyl acyl thioester product which can be reductively off-loaded by the terminal reductase (R) domain in gkaA. The alpha/beta hydrolase gkaG is then required to catalyze the subsequent Knoevenagel condensation that affords the 3-pyrrolin-2-one ring, whereas the three proteins gkaB, gkaX and gkaZ then function synergistically to form the cyclophane. This Penicillium citrinum protein is Hexane cyclase gkaB.